A 543-amino-acid polypeptide reads, in one-letter code: Chaperonin GroEL (543 aa).

ATP is bound by residues 29–32 (TLGP), 86–90 (DGTTT), glycine 413, 476–478 (NAA), and aspartate 492.

The protein belongs to the chaperonin (HSP60) family. As to quaternary structure, forms a cylinder of 14 subunits composed of two heptameric rings stacked back-to-back. Interacts with the co-chaperonin GroES.

Its subcellular location is the cytoplasm. The catalysed reaction is ATP + H2O + a folded polypeptide = ADP + phosphate + an unfolded polypeptide.. Its function is as follows. Together with its co-chaperonin GroES, plays an essential role in assisting protein folding. The GroEL-GroES system forms a nano-cage that allows encapsulation of the non-native substrate proteins and provides a physical environment optimized to promote and accelerate protein folding. The protein is Chaperonin GroEL of Streptococcus pyogenes serotype M49 (strain NZ131).